The primary structure comprises 153 residues: 6,7-dimethyl-8-ribityllumazine synthase (153 aa).

Residues Phe-22, Ala-56–Glu-58, and Thr-80–Ile-82 contribute to the 5-amino-6-(D-ribitylamino)uracil site. Ala-85–Thr-86 lines the (2S)-2-hydroxy-3-oxobutyl phosphate pocket. His-88 (proton donor) is an active-site residue. Phe-113 lines the 5-amino-6-(D-ribitylamino)uracil pocket. Position 127 (Arg-127) interacts with (2S)-2-hydroxy-3-oxobutyl phosphate.

The protein belongs to the DMRL synthase family.

The enzyme catalyses (2S)-2-hydroxy-3-oxobutyl phosphate + 5-amino-6-(D-ribitylamino)uracil = 6,7-dimethyl-8-(1-D-ribityl)lumazine + phosphate + 2 H2O + H(+). Its pathway is cofactor biosynthesis; riboflavin biosynthesis; riboflavin from 2-hydroxy-3-oxobutyl phosphate and 5-amino-6-(D-ribitylamino)uracil: step 1/2. In terms of biological role, catalyzes the formation of 6,7-dimethyl-8-ribityllumazine by condensation of 5-amino-6-(D-ribitylamino)uracil with 3,4-dihydroxy-2-butanone 4-phosphate. This is the penultimate step in the biosynthesis of riboflavin. This chain is 6,7-dimethyl-8-ribityllumazine synthase, found in Clostridium perfringens (strain 13 / Type A).